The chain runs to 267 residues: DNA repair protein RecO (267 aa).

This sequence belongs to the RecO family.

Involved in DNA repair and RecF pathway recombination. The chain is DNA repair protein RecO from Moorella thermoacetica (strain ATCC 39073 / JCM 9320).